We begin with the raw amino-acid sequence, 963 residues long: Importin-13 (963 aa).

HEAT repeat units follow at residues 24–54 (ENVE…QAQV), 56–88 (PQAW…KISR), 95–135 (TDQY…LSMM), 142–179 (AVAD…EFQT), 194–231 (LAVE…SWVQ), 236–268 (LQDC…NAIS), 276–325 (VNTL…ALLD), 330–372 (WQSF…DDIL), 375–438 (EAEK…YEML), 440–476 (AELL…FQSI), 487–522 (VVPG…WLAD), 524–558 (PVMI…CREC), 562–600 (LPPY…LLSA), 603–648 (VEEI…SNLF), 676–716 (PVVV…VKTL), 720–754 (FAPM…VHIF), 761–803 (FPPI…ALKR), 815–845 (VKAV…TELL), 860–893 (EDGR…FALN), and 897–931 (FSLL…QQIL). In terms of domain architecture, Importin N-terminal spans 45-111 (AQKWLMQAQV…KAQLFTQITR (67 aa)).

The protein belongs to the importin beta family. In terms of assembly, interacts with UBC9, RAN, RBM8A, eIF-1A and PAX6.

Its subcellular location is the cytoplasm. The protein localises to the nucleus. Functionally, functions in nuclear protein import as nuclear transport receptor. Serves as receptor for nuclear localization signals (NLS) in cargo substrates. Is thought to mediate docking of the importin/substrate complex to the nuclear pore complex (NPC) through binding to nucleoporin and the complex is subsequently translocated through the pore by an energy requiring, Ran-dependent mechanism. At the nucleoplasmic side of the NPC, Ran binds to the importin, the importin/substrate complex dissociates and importin is re-exported from the nucleus to the cytoplasm where GTP hydrolysis releases Ran. The directionality of nuclear import is thought to be conferred by an asymmetric distribution of the GTP- and GDP-bound forms of Ran between the cytoplasm and nucleus. Mediates the nuclear import of UBC9, the RBM8A/MAGOH complex, PAX6 and probably other members of the paired homeobox family. Also mediates nuclear export of eIF-1A, and the cytoplasmic release of eIF-1A is triggered by the loading of import substrates onto IPO13. In Mus musculus (Mouse), this protein is Importin-13 (Ipo13).